The primary structure comprises 185 residues: Peptidyl-tRNA hydrolase (185 aa).

Residue tyrosine 14 coordinates tRNA. Histidine 19 functions as the Proton acceptor in the catalytic mechanism. The tRNA site is built by tyrosine 65, asparagine 67, and asparagine 113.

It belongs to the PTH family. Monomer.

The protein localises to the cytoplasm. It catalyses the reaction an N-acyl-L-alpha-aminoacyl-tRNA + H2O = an N-acyl-L-amino acid + a tRNA + H(+). In terms of biological role, hydrolyzes ribosome-free peptidyl-tRNAs (with 1 or more amino acids incorporated), which drop off the ribosome during protein synthesis, or as a result of ribosome stalling. Catalyzes the release of premature peptidyl moieties from peptidyl-tRNA molecules trapped in stalled 50S ribosomal subunits, and thus maintains levels of free tRNAs and 50S ribosomes. The sequence is that of Peptidyl-tRNA hydrolase from Rickettsia bellii (strain OSU 85-389).